The sequence spans 477 residues: Aspartyl/glutamyl-tRNA(Asn/Gln) amidotransferase subunit B (477 aa).

This sequence belongs to the GatB/GatE family. GatB subfamily. In terms of assembly, heterotrimer of A, B and C subunits.

The catalysed reaction is L-glutamyl-tRNA(Gln) + L-glutamine + ATP + H2O = L-glutaminyl-tRNA(Gln) + L-glutamate + ADP + phosphate + H(+). The enzyme catalyses L-aspartyl-tRNA(Asn) + L-glutamine + ATP + H2O = L-asparaginyl-tRNA(Asn) + L-glutamate + ADP + phosphate + 2 H(+). In terms of biological role, allows the formation of correctly charged Asn-tRNA(Asn) or Gln-tRNA(Gln) through the transamidation of misacylated Asp-tRNA(Asn) or Glu-tRNA(Gln) in organisms which lack either or both of asparaginyl-tRNA or glutaminyl-tRNA synthetases. The reaction takes place in the presence of glutamine and ATP through an activated phospho-Asp-tRNA(Asn) or phospho-Glu-tRNA(Gln). This chain is Aspartyl/glutamyl-tRNA(Asn/Gln) amidotransferase subunit B, found in Lactococcus lactis subsp. cremoris (strain MG1363).